The sequence spans 301 residues: Protoheme IX farnesyltransferase 2 (301 aa).

Transmembrane regions (helical) follow at residues Val-29–Val-49, Val-51–Leu-71, Ala-101–Asn-121, Leu-123–Leu-143, Asn-150–Thr-170, Ala-177–Ile-197, Cys-223–Met-243, Cys-244–Trp-264, and Phe-281–Ser-301.

Belongs to the UbiA prenyltransferase family. Protoheme IX farnesyltransferase subfamily.

The protein resides in the cell inner membrane. It catalyses the reaction heme b + (2E,6E)-farnesyl diphosphate + H2O = Fe(II)-heme o + diphosphate. The protein operates within porphyrin-containing compound metabolism; heme O biosynthesis; heme O from protoheme: step 1/1. Functionally, converts heme B (protoheme IX) to heme O by substitution of the vinyl group on carbon 2 of heme B porphyrin ring with a hydroxyethyl farnesyl side group. The protein is Protoheme IX farnesyltransferase 2 of Shewanella sp. (strain W3-18-1).